A 459-amino-acid chain; its full sequence is Asparagine--tRNA ligase (459 aa).

It belongs to the class-II aminoacyl-tRNA synthetase family. In terms of assembly, homodimer.

The protein resides in the cytoplasm. It catalyses the reaction tRNA(Asn) + L-asparagine + ATP = L-asparaginyl-tRNA(Asn) + AMP + diphosphate + H(+). The sequence is that of Asparagine--tRNA ligase from Pelobacter propionicus (strain DSM 2379 / NBRC 103807 / OttBd1).